The primary structure comprises 556 residues: MYRVFASRALRAKSLCDKSSTSLASLTLSRLNHSIPFATVDAEELSGAHPAEVQSFVQGKWIGSSNHNTLLDPLNGEPFIKVAEVDESGTQPFVDSLSQCPKHGLHNPFKSPERYLLYGDISTKAAHMLALPKVADFFARLIQRVAPKSYQQAAGEVFVTRKFLENFCGDQVRFLARSFAIPGNHLGQQSHGYRWPYGPVTIVTPFNFPLEIPLLQLMGALYMGNKPLLKVDSKVSIVMEQMMRLLHYCGLPAEDVDFINSDGKTMNKILLEANPRMTLFTGSSRVAEKLALDLKGRIRLEDAGFDWKVLGPDVQEVDYVAWQCDQDAYACSGQKCSAQSMLFVHENWSKTPLVSKLKELAERRKLEDLTIGPVLTFTTEAMLEHMENLLQIPGSKLLFGGKELKNHSIPSIYGALEPTAVYVPIEEILKDNKTYELVTKEIFGPFQIVTEYKKDQLPLVLEALERMHAHLTAAVVSNDPIFLQEVIGNSVNGTTYAGLRGRTTGAPQNHWFGPAGDPRGAGIGTPEAIKLVWSCHREVIYDYGPVPQGWELPPST.

NAD(+) is bound at residue 282 to 287; that stretch reads GSSRVA. Glu301 functions as the Proton acceptor in the catalytic mechanism. Cys336 functions as the Nucleophile in the catalytic mechanism.

Belongs to the aldehyde dehydrogenase family. As to expression, highly expressed in flowers. Constitutively expressed at low levels in the other tissues. Highly expressed in pollen grains and tissues undergoing cell death. Expressed in old leaves, mature siliques and developing embryos.

The protein resides in the mitochondrion matrix. The enzyme catalyses (S)-1-pyrroline-5-carboxylate + NAD(+) + 2 H2O = L-glutamate + NADH + H(+). It participates in amino-acid degradation; L-proline degradation into L-glutamate; L-glutamate from L-proline: step 2/2. Functionally, plays a role in the inhibition of programmed cell death by converting the toxic proline catabolism intermediate (s)-1-pyrroline-5-carboxylate (P5C) to glutamate. The chain is Delta-1-pyrroline-5-carboxylate dehydrogenase 12A1, mitochondrial from Arabidopsis thaliana (Mouse-ear cress).